The primary structure comprises 320 residues: o-succinylbenzoate synthase (320 aa).

Lys-133 (proton donor) is an active-site residue. Mg(2+)-binding residues include Asp-161, Glu-190, and Asp-213. Lys-235 functions as the Proton acceptor in the catalytic mechanism.

This sequence belongs to the mandelate racemase/muconate lactonizing enzyme family. MenC type 1 subfamily. Requires a divalent metal cation as cofactor.

It carries out the reaction (1R,6R)-6-hydroxy-2-succinyl-cyclohexa-2,4-diene-1-carboxylate = 2-succinylbenzoate + H2O. It participates in quinol/quinone metabolism; 1,4-dihydroxy-2-naphthoate biosynthesis; 1,4-dihydroxy-2-naphthoate from chorismate: step 4/7. It functions in the pathway quinol/quinone metabolism; menaquinone biosynthesis. Its function is as follows. Converts 2-succinyl-6-hydroxy-2,4-cyclohexadiene-1-carboxylate (SHCHC) to 2-succinylbenzoate (OSB). This Escherichia coli O139:H28 (strain E24377A / ETEC) protein is o-succinylbenzoate synthase.